Reading from the N-terminus, the 65-residue chain is Small, acid-soluble spore protein Tlp (65 aa).

Belongs to the Tlp family.

It localises to the spore core. The sequence is that of Small, acid-soluble spore protein Tlp from Bacillus anthracis (strain A0248).